A 258-amino-acid polypeptide reads, in one-letter code: Ubiquinone/menaquinone biosynthesis C-methyltransferase UbiE (258 aa).

The segment at 1–21 (MPESRTSADGGMETSYGFREV) is disordered. S-adenosyl-L-methionine-binding positions include Thr81, Asp102, and 130-131 (NA).

It belongs to the class I-like SAM-binding methyltransferase superfamily. MenG/UbiE family.

The enzyme catalyses a 2-demethylmenaquinol + S-adenosyl-L-methionine = a menaquinol + S-adenosyl-L-homocysteine + H(+). It carries out the reaction a 2-methoxy-6-(all-trans-polyprenyl)benzene-1,4-diol + S-adenosyl-L-methionine = a 5-methoxy-2-methyl-3-(all-trans-polyprenyl)benzene-1,4-diol + S-adenosyl-L-homocysteine + H(+). Its pathway is quinol/quinone metabolism; menaquinone biosynthesis; menaquinol from 1,4-dihydroxy-2-naphthoate: step 2/2. It participates in cofactor biosynthesis; ubiquinone biosynthesis. Functionally, methyltransferase required for the conversion of demethylmenaquinol (DMKH2) to menaquinol (MKH2) and the conversion of 2-polyprenyl-6-methoxy-1,4-benzoquinol (DDMQH2) to 2-polyprenyl-3-methyl-6-methoxy-1,4-benzoquinol (DMQH2). This chain is Ubiquinone/menaquinone biosynthesis C-methyltransferase UbiE, found in Rhizobium leguminosarum bv. trifolii (strain WSM2304).